Consider the following 192-residue polypeptide: Protein A16 (192 aa).

Residues 1 to 22 form the signal peptide; the sequence is MLLANTAAAVLLLIVCIGASVG. The C-type lectin domain occupies 71-186; sequence KNKKFTIGTL…CLNPLNIFPY (116 aa). A disulfide bridge links Cys-163 with Cys-177.

As to expression, expressed in the gut of adults.

The chain is Protein A16 (CTL3) from Anopheles gambiae (African malaria mosquito).